The sequence spans 883 residues: MSSGANITYASRKRRKPVQKTVKPIPAEGIKSNPSKRHRDRLNTELDRLASLLPFPQDVINKLDKLSVLRLSVSYLRAKSFFDVALKSTPADRNGGQDQCRAQIRDWQDLQEGEFLLQALNGFVLVVTADALVFYASSTIQDYLGFQQSDVIHQSVYELIHTEDRAEFQRQLHWALNPDSAQGVDEAHGPPQAAVYYTPDQLPPENASFMERCFRCRLRCLLDNSSGFLAMNFQGRLKYLHGQNKKGKDGALLPPQLALFAIATPLQPPSILEIRTKNFIFRTKHKLDFTPIGCDAKGQLILGYTEVELCTRGSGYQFIHAADMLHCAESHIRMIKTGESGMTVFRLLAKHSRWRWVQSNARLIYRNGRPDYIIATQRPLTDEEGREHLQKRSTSLPFMFATGEAVLYEISSPFSPIMDPLPIRTKSNTSRKDWAPQSTPSKDSFHPSSLMSALIQQDESIYLCPPSSPAPLDSHFLMGSVSKCGSWQDSFAAAGSEAALKHEQIGHAQDVNLALSGGPSELFPDNKNNDLYNIMRNLGIDFEDIRSMQNEEFFRTDSTAAGEVDFKDIDITDEILTYVQDSLNNSTLMNSACQQQPVTQHLSCMLQERLQLEQQQQLQQPPPQALEPQQQLCQMVCPQQDLGPKHTQINGTFASWNPTPPVSFNCPQQELKHYQLFSSLQGTAQEFPYKPEVDSVPYTQNFAPCNQPLLPEHSKSVQLDFPGRDFEPSLHPTTSNLDFVSCLQVPENQSHGINSQSAMVSPQAYYAGAMSMYQCQPGPQRTPVDQTQYSSEIPGSQAFLSKVQSRGVFNETYSSDLSSIDHAVQTTGHLHHLAEARPLPDISHLVGSCSSHARMKFIQEQDTGTVRVGHQYTFSKTDFDSCI.

Residues 1 to 9 constitute a propeptide that is removed on maturation; it reads MSSGANITY. The interval 1–38 is disordered; it reads MSSGANITYASRKRRKPVQKTVKPIPAEGIKSNPSKRH. 2 short sequence motifs (nuclear localization signal) span residues 12–15 and 36–41; these read RKRR and KRHRDR. The region spanning 26–79 is the bHLH domain; that stretch reads PAEGIKSNPSKRHRDRLNTELDRLASLLPFPQDVINKLDKLSVLRLSVSYLRAK. Residues 37-65 form a DNA-binding region; sequence RHRDRLNTELDRLASLLPFPQDVINKLDK. 3 required for maintaining the overall integrity of the AHR:ARNT heterodimer and its transcriptional activity regions span residues 49–81, 116–124, and 260–262; these read LASLLPFPQDVINKLDKLSVLRLSVSYLRAKSF, LLQALNGFV, and FAI. The Nuclear export signal motif lies at 63–71; sequence LDKLSVLRL. Residues 111–175 enclose the PAS 1 domain; it reads QEGEFLLQAL…AEFQRQLHWA (65 aa). A PAS 2 domain is found at 266–336; that stretch reads LQPPSILEIR…CAESHIRMIK (71 aa). The PAC domain maps to 342–383; the sequence is MTVFRLLAKHSRWRWVQSNARLIYRNGRPDYIIATQRPLTDE. Residues 421 to 449 form a disordered region; that stretch reads LPIRTKSNTSRKDWAPQSTPSKDSFHPSS. A compositionally biased stretch (polar residues) spans 436-449; it reads PQSTPSKDSFHPSS.

In terms of assembly, homodimer. Heterodimer; efficient DNA binding requires dimerization with another bHLH protein. Interacts with ARNT; the heterodimer ARNT:AHR binds to core DNA sequence 5'-TGCGTG-3' within the dioxin response element (DRE) of target gene promoters and activates their transcription. Binds MYBBP1A. Interacts with coactivators including SRC-1, RIP140 and NOCA7, and with the corepressor SMRT. Interacts with NEDD8 and IVNS1ABP. Interacts with BMAL1. Interacts with HSP90AB1. Interacts with TIPARP; leading to mono-ADP-ribosylation of AHR and subsequent inhibition of AHR. Post-translationally, mono-ADP-ribosylated, leading to inhibit transcription activator activity of AHR.

It localises to the cytoplasm. It is found in the nucleus. In terms of biological role, ligand-activated transcription factor that enables cells to adapt to changing conditions by sensing compounds from the environment, diet, microbiome and cellular metabolism, and which plays important roles in development, immunity and cancer. Upon ligand binding, translocates into the nucleus, where it heterodimerizes with ARNT and induces transcription by binding to xenobiotic response elements (XRE). Regulates a variety of biological processes, including angiogenesis, hematopoiesis, drug and lipid metabolism, cell motility and immune modulation. Xenobiotics can act as ligands: upon xenobiotic-binding, activates the expression of multiple phase I and II xenobiotic chemical metabolizing enzyme genes (such as the CYP1A1 gene). Mediates biochemical and toxic effects of halogenated aromatic hydrocarbons. Next to xenobiotics, natural ligands derived from plants, microbiota, and endogenous metabolism are potent AHR agonists. Tryptophan (Trp) derivatives constitute an important class of endogenous AHR ligands. Acts as a negative regulator of anti-tumor immunity: indoles and kynurenic acid generated by Trp catabolism act as ligand and activate AHR, thereby promoting AHR-driven cancer cell motility and suppressing adaptive immunity. Regulates the circadian clock by inhibiting the basal and circadian expression of the core circadian component PER1. Inhibits PER1 by repressing the CLOCK-BMAL1 heterodimer mediated transcriptional activation of PER1. The heterodimer ARNT:AHR binds to core DNA sequence 5'-TGCGTG-3' within the dioxin response element (DRE) of target gene promoters and activates their transcription. The polypeptide is Aryl hydrocarbon receptor (Ahr) (Mus musculus molossinus (Japanese house mouse)).